The chain runs to 46 residues: Antimicrobial peptide eNAP-2 (46 aa).

The WAP domain maps to 12–46 (RPGRCPTVPPGTFGHCACLCTGDASEPKGQKCCSN).

Its function is as follows. Has antibiotic activity against several equine uterine pathogens; S.zooepidemicus, E.coli and P.aeruginosa. Highly efficient against S.zoopedemicus. Not active against K.pneumoniae. Selectively inactivates microbial serine proteases (subtilisin A and proteinase K) without inhibiting mammalian serine proteases (human neutrophil elastase, human cathepsin G and bovine pancreatic trypsin). The protein is Antimicrobial peptide eNAP-2 of Equus caballus (Horse).